We begin with the raw amino-acid sequence, 619 residues long: Chaperone protein HscA homolog (619 aa).

This sequence belongs to the heat shock protein 70 family.

Chaperone involved in the maturation of iron-sulfur cluster-containing proteins. Has a low intrinsic ATPase activity which is markedly stimulated by HscB. The sequence is that of Chaperone protein HscA homolog from Acinetobacter baumannii (strain ATCC 17978 / DSM 105126 / CIP 53.77 / LMG 1025 / NCDC KC755 / 5377).